A 91-amino-acid polypeptide reads, in one-letter code: Large ribosomal subunit protein eL31 (91 aa).

This sequence belongs to the eukaryotic ribosomal protein eL31 family.

This is Large ribosomal subunit protein eL31 from Pyrobaculum neutrophilum (strain DSM 2338 / JCM 9278 / NBRC 100436 / V24Sta) (Thermoproteus neutrophilus).